Here is a 135-residue protein sequence, read N- to C-terminus: Large ribosomal subunit protein uL16c (135 aa).

Basic residues predominate over residues 1–17 (MLSPKRTRFRKQHRGRM). Residues 1–20 (MLSPKRTRFRKQHRGRMKGT) form a disordered region.

Belongs to the universal ribosomal protein uL16 family. Part of the 50S ribosomal subunit.

The protein localises to the plastid. Its subcellular location is the chloroplast. This is Large ribosomal subunit protein uL16c from Lemna minor (Common duckweed).